The following is a 167-amino-acid chain: MAKLEAQQKDDLQEKLIAVNRVSKVVKGGRIFSFTALTVVGDGNGKIGYGYGKAREVPAAIQKAMEKARRNIVTVELNAGTLHHPVKGRHTGSLVYMQPASQGTGIIAGGAMRAVLEVAGVHNVLSKAYGSTNPINIVRATVDALVHMKSPSQIAAKRGLNVDEIRG.

Residues 12–75 (LQEKLIAVNR…EKARRNIVTV (64 aa)) form the S5 DRBM domain.

The protein belongs to the universal ribosomal protein uS5 family. Part of the 30S ribosomal subunit. Contacts proteins S4 and S8.

With S4 and S12 plays an important role in translational accuracy. Its function is as follows. Located at the back of the 30S subunit body where it stabilizes the conformation of the head with respect to the body. The polypeptide is Small ribosomal subunit protein uS5 (Shewanella baltica (strain OS223)).